A 96-amino-acid polypeptide reads, in one-letter code: Envelope glycoprotein N (96 aa).

Positions 1 to 21 are cleaved as a signal peptide; that stretch reads MPRSPLIVAVVAAALFAIVRG. At 22-54 the chain is on the virion surface side; it reads RDPLLDAMRREGAMDFWSAGCYARGVPLSEPPQ. A helical membrane pass occupies residues 55–75; that stretch reads ALVVFYVALTAVMVAVALYAY. The Intravirion segment spans residues 76–96; that stretch reads GLCFRLMGASGPNKKESRGRG.

This sequence belongs to the herpesviridae glycoprotein N family. Interacts (via N-terminus) with gM (via N-terminus). The gM-gN heterodimer forms the gCII complex.

The protein resides in the virion membrane. It is found in the host membrane. Its subcellular location is the host Golgi apparatus. The protein localises to the host trans-Golgi network. Functionally, envelope glycoprotein necessary for proper maturation of gM and modulation of its membrane fusion activity. Also plays a critical role in virion morphogenesis. The polypeptide is Envelope glycoprotein N (Bos taurus (Bovine)).